A 160-amino-acid chain; its full sequence is Major pollen allergen Bet v 1-F/I (160 aa).

Lys-55, Tyr-82, Tyr-84, and Asn-101 together coordinate brassinolide.

This sequence belongs to the BetVI family.

It localises to the cytoplasm. May be a general steroid carrier protein. The polypeptide is Major pollen allergen Bet v 1-F/I (BETV1F) (Betula pendula (European white birch)).